A 164-amino-acid polypeptide reads, in one-letter code: UPF0114 protein Avin_40830 (164 aa).

The next 4 helical transmembrane spans lie at 15–35, 53–73, 103–125, and 136–156; these read LLAPIYIGLSVALLALTLKFF, LILVLLSMIDMALVGGLLVMV, GSLKLKVAASIVAISSIHLLRVF, and LLWYVLIHMTFVVSAFVMSYL.

Belongs to the UPF0114 family.

The protein localises to the cell membrane. The chain is UPF0114 protein Avin_40830 from Azotobacter vinelandii (strain DJ / ATCC BAA-1303).